Here is a 226-residue protein sequence, read N- to C-terminus: Ribonuclease 3 (226 aa).

The 123-residue stretch at 7 to 129 (DARLQQALGY…LFGAVFLDAG (123 aa)) folds into the RNase III domain. Glu-42 is a binding site for Mg(2+). Asp-46 is a catalytic residue. Mg(2+) contacts are provided by Asp-115 and Glu-118. Glu-118 is an active-site residue. The 71-residue stretch at 156–226 (DPKTRLQEIL…ARQACAELQR (71 aa)) folds into the DRBM domain.

Belongs to the ribonuclease III family. In terms of assembly, homodimer. Mg(2+) serves as cofactor.

The protein localises to the cytoplasm. It carries out the reaction Endonucleolytic cleavage to 5'-phosphomonoester.. Its function is as follows. Digests double-stranded RNA. Involved in the processing of primary rRNA transcript to yield the immediate precursors to the large and small rRNAs (23S and 16S). Processes some mRNAs, and tRNAs when they are encoded in the rRNA operon. Processes pre-crRNA and tracrRNA of type II CRISPR loci if present in the organism. In Thiobacillus denitrificans (strain ATCC 25259 / T1), this protein is Ribonuclease 3.